The primary structure comprises 252 residues: NADH-quinone oxidoreductase subunit E (252 aa).

The [2Fe-2S] cluster site is built by cysteine 114, cysteine 119, cysteine 155, and cysteine 159. Residues leucine 211–glutamate 252 are disordered.

The protein belongs to the complex I 24 kDa subunit family. It depends on [2Fe-2S] cluster as a cofactor.

It catalyses the reaction a quinone + NADH + 5 H(+)(in) = a quinol + NAD(+) + 4 H(+)(out). In terms of biological role, NDH-1 shuttles electrons from NADH, via FMN and iron-sulfur (Fe-S) centers, to quinones in the respiratory chain. The immediate electron acceptor for the enzyme in this species is believed to be menaquinone. Couples the redox reaction to proton translocation (for every two electrons transferred, four hydrogen ions are translocated across the cytoplasmic membrane), and thus conserves the redox energy in a proton gradient. This chain is NADH-quinone oxidoreductase subunit E (nuoE), found in Mycobacterium bovis (strain ATCC BAA-935 / AF2122/97).